The primary structure comprises 211 residues: Uracil phosphoribosyltransferase (211 aa).

5-phospho-alpha-D-ribose 1-diphosphate-binding positions include Arg78, Arg103, and 130–138 (DPMLATGGT). Uracil is bound by residues Ile196 and 201-203 (GDA). Asp202 provides a ligand contact to 5-phospho-alpha-D-ribose 1-diphosphate.

The protein belongs to the UPRTase family. The cofactor is Mg(2+).

It carries out the reaction UMP + diphosphate = 5-phospho-alpha-D-ribose 1-diphosphate + uracil. It functions in the pathway pyrimidine metabolism; UMP biosynthesis via salvage pathway; UMP from uracil: step 1/1. Allosterically activated by GTP. Its function is as follows. Catalyzes the conversion of uracil and 5-phospho-alpha-D-ribose 1-diphosphate (PRPP) to UMP and diphosphate. This Kineococcus radiotolerans (strain ATCC BAA-149 / DSM 14245 / SRS30216) protein is Uracil phosphoribosyltransferase.